A 1393-amino-acid chain; its full sequence is Rab3 GTPase-activating protein non-catalytic subunit (1393 aa).

Residues 36 to 67 (RDPSKSTDWEDDGWGAWEENEPQEPEEEGNTC) form a disordered region. Residue Ser-39 is modified to Phosphoserine. Residues 44–64 (WEDDGWGAWEENEPQEPEEEG) show a composition bias toward acidic residues. The residue at position 450 (Ser-450) is a Phosphoserine. Phosphothreonine is present on Thr-901. Ser-916 and Ser-978 each carry phosphoserine.

It belongs to the Rab3-GAP regulatory subunit family. In terms of assembly, the Rab3 GTPase-activating complex is a heterodimer composed of RAB3GAP1 and RAB3GAP2. The Rab3 GTPase-activating complex interacts with DMXL2. Interacts with LMAN1. Ubiquitous.

It localises to the cytoplasm. The protein localises to the endoplasmic reticulum. Its function is as follows. Regulatory subunit of the Rab3 GTPase-activating (Rab3GAP) complex composed of RAB3GAP1 and RAB3GAP2, which has GTPase-activating protein (GAP) activity towards various Rab3 subfamily members (RAB3A, RAB3B, RAB3C and RAB3D), RAB5A and RAB43, and guanine nucleotide exchange factor (GEF) activity towards RAB18. As part of the Rab3GAP complex, acts as a GAP for Rab3 proteins by converting active RAB3-GTP to the inactive form RAB3-GDP. Rab3 proteins are involved in regulated exocytosis of neurotransmitters and hormones. The Rab3GAP complex acts as a GEF for RAB18 by promoting the conversion of inactive RAB18-GDP to the active form RAB18-GTP. Recruits and stabilizes RAB18 at the cis-Golgi membrane in human fibroblasts where RAB18 is most likely activated. Also involved in RAB18 recruitment at the endoplasmic reticulum (ER) membrane where it maintains proper ER structure. Required for normal eye and brain development. May participate in neurodevelopmental processes such as proliferation, migration and differentiation before synapse formation, and non-synaptic vesicular release of neurotransmitters. In Homo sapiens (Human), this protein is Rab3 GTPase-activating protein non-catalytic subunit.